Reading from the N-terminus, the 244-residue chain is CTD nuclear envelope phosphatase 1 (244 aa).

The chain crosses the membrane as a helical span at residues 7-29 (LLGLRGFVAFAAKLWSFVLYLLR). The region spanning 58-225 (QVKRKVLVLD…NLLPMLDALR (168 aa)) is the FCP1 homology domain.

This sequence belongs to the dullard family. As to quaternary structure, interacts with bmpr1a, bmpr1b and bmpr2.

The protein localises to the membrane. It localises to the cytoplasm. The protein resides in the perinuclear region. The enzyme catalyses O-phospho-L-seryl-[protein] + H2O = L-seryl-[protein] + phosphate. The catalysed reaction is O-phospho-L-threonyl-[protein] + H2O = L-threonyl-[protein] + phosphate. Its function is as follows. Serine/threonine protein phosphatase that may dephosphorylate and activate lipins. Lipins are phosphatidate phosphatases that catalyze the conversion of phosphatidic acid to diacylglycerol and control the metabolism of fatty acids at different levels. May indirectly modulate the lipid composition of nuclear and/or endoplasmic reticulum membranes and be required for proper nuclear membrane morphology and/or dynamics. May also indirectly regulate the production of lipid droplets and triacylglycerol. Induces neuronal differentiation by antagonizing BMP signaling. Acts both by dephosphorylating BMPR1A and by promoting BMPR2 proteasomal degradation. This is CTD nuclear envelope phosphatase 1 (ctdnep1) from Xenopus laevis (African clawed frog).